The chain runs to 287 residues: Survival motor neuron protein (287 aa).

A disordered region spans residues 1–27; the sequence is MGGGGGLPEPEDSVLFRRGTGQSDDSD. A P1 (binding site for GEMIN2) region spans residues 8-39; the sequence is PEPEDSVLFRRGTGQSDDSDIWDDTALIKAYD. Thr-20 carries the post-translational modification Phosphothreonine. Residues Ser-23 and Ser-26 each carry the phosphoserine modification. A Glycyl lysine isopeptide (Lys-Gly) (interchain with G-Cter in SUMO2) cross-link involves residue Lys-46. Residues 52 to 83 are disordered; that stretch reads GDISEASDKPKSTPKRKPAKKNKSQKKNATTA. Positions 63–77 are enriched in basic residues; the sequence is STPKRKPAKKNKSQK. The residue at position 64 (Thr-64) is a Phosphothreonine. The Tudor domain maps to 86 to 146; it reads QWKVGDKCSA…LSPACEVANN (61 aa). The tract at residues 92-205 is required for interaction with RPP20/POP7; it reads KCSAVWSEDG…MSGSGLGPGK (114 aa). The segment at 148-216 is disordered; sequence EQDTQENENE…GVKFSGPPPP (69 aa). The segment covering 157–180 has biased composition (polar residues); the sequence is ESQISTDESENSSRSPGNKPNNIK. Lys-205 participates in a covalent cross-link: Glycyl lysine isopeptide (Lys-Gly) (interchain with G-Cter in SUMO2). The tract at residues 234 to 261 is P2 (binding site for SM B); the sequence is PPIIPPPPPICPDSLDDADALGSMLISW. A required for interaction with SYNCRIP region spans residues 273-287; that stretch reads GFKQNQKEGRCSHFN.

Belongs to the SMN family. As to quaternary structure, homooligomer; may form higher order homooligomers in the dimer to octamer range. Part of the core SMN complex that contains SMN1, GEMIN2/SIP1, DDX20/GEMIN3, GEMIN4, GEMIN5, GEMIN6, GEMIN7, GEMIN8 and STRAP/UNRIP. Part of the SMN-Sm complex that contains SMN1, GEMIN2/SIP1, DDX20/GEMIN3, GEMIN4, GEMIN5, GEMIN6, GEMIN7, GEMIN8, STRAP/UNRIP and the Sm proteins SNRPB, SNRPD1, SNRPD2, SNRPD3, SNRPE, SNRPF and SNRPG. Component of an import snRNP complex composed of KPNB1, RNUT1, SMN1 and ZNF259. Interacts with DDX20, FBL, NOLA1, RNUT1, SYNCRIP and with several spliceosomal snRNP core Sm proteins, including SNRPB, SNRPD1, SNRPD2, SNRPD3, SNRPE and ILF3. Interacts with GEMIN2; the interaction is direct. Interacts with GEMIN3; the interaction is direct. Interacts with GEMIN8; the interaction is direct. Interacts with SNRPB; the interaction is direct. Interacts (via Tudor domain) with SNRPD1 (via C-terminus); the interaction is direct. Interacts with SNRPD2; the interaction is direct. Interacts (via Tudor domain) with SNRPD3 (via C-terminus); the interaction is direct. Interacts with SNRPE; the interaction is direct. Interacts with OSTF1, LSM10, LSM11 and RPP20/POP7. Interacts (via C-terminal region) with ZPR1 (via C-terminal region). Interacts (via Tudor domain) with COIL. Interacts with SETX; recruits SETX to POLR2A. Interacts with POLR2A (via the C-terminal domain (CTD)). Interacts with PRMT5. Interacts with XRN2. Interacts (via C-terminus) with FMR1 (via C-terminus); the interaction is direct and occurs in a RNA-independent manner. Interacts (via Tudor domain) with SF3B2 ('Arg-508'-methylated form). Interacts with WRAP53/TCAB1. Interacts (via Tudor domain) with ELAVL4 in an RNA-independent manner; the interaction is required for localization of ELAVL4 to RNA granules. Interacts with FRG1.

It is found in the nucleus. The protein localises to the gem. The protein resides in the cajal body. It localises to the cytoplasm. Its subcellular location is the cytoplasmic granule. It is found in the perikaryon. The protein localises to the cell projection. The protein resides in the neuron projection. It localises to the axon. Its subcellular location is the myofibril. It is found in the sarcomere. The protein localises to the z line. Its function is as follows. The SMN complex catalyzes the assembly of small nuclear ribonucleoproteins (snRNPs), the building blocks of the spliceosome, and thereby plays an important role in the splicing of cellular pre-mRNAs. Most spliceosomal snRNPs contain a common set of Sm proteins SNRPB, SNRPD1, SNRPD2, SNRPD3, SNRPE, SNRPF and SNRPG that assemble in a heptameric protein ring on the Sm site of the small nuclear RNA to form the core snRNP (Sm core). In the cytosol, the Sm proteins SNRPD1, SNRPD2, SNRPE, SNRPF and SNRPG are trapped in an inactive 6S pICln-Sm complex by the chaperone CLNS1A that controls the assembly of the core snRNP. To assemble core snRNPs, the SMN complex accepts the trapped 5Sm proteins from CLNS1A forming an intermediate. Binding of snRNA inside 5Sm ultimately triggers eviction of the SMN complex, thereby allowing binding of SNRPD3 and SNRPB to complete assembly of the core snRNP. Within the SMN complex, SMN1 acts as a structural backbone and together with GEMIN2 it gathers the Sm complex subunits. Ensures the correct splicing of U12 intron-containing genes that may be important for normal motor and proprioceptive neurons development. Also required for resolving RNA-DNA hybrids created by RNA polymerase II, that form R-loop in transcription terminal regions, an important step in proper transcription termination. May also play a role in the metabolism of small nucleolar ribonucleoprotein (snoRNPs). The chain is Survival motor neuron protein (SMN1) from Canis lupus familiaris (Dog).